Reading from the N-terminus, the 104-residue chain is uncharacterized protein (104 aa).

This is an uncharacterized protein from Homo sapiens (Human).